Here is a 168-residue protein sequence, read N- to C-terminus: MNWMDIRIGQGYDVHALVEGRKLILGGVEIPHTRGLLGHSDADALLHAITDALFGAAGLGDIGRHFPDTDPAFAGADSRVLLREAVRRVREAGYDVGNVDATVIAQKPKLAPHVPGMVANLAADLGIAPGRCNVKAKTNEKLGFEGREDGIVAQAAVLIYRAEAAEQD.

Residues Asp13 and His15 each contribute to the a divalent metal cation site. 4-CDP-2-C-methyl-D-erythritol 2-phosphate contacts are provided by residues 13-15 and 39-40; these read DVH and HS. Residue His47 participates in a divalent metal cation binding. Residues 61–63, 66–70, Phe144, and Arg147 contribute to the 4-CDP-2-C-methyl-D-erythritol 2-phosphate site; these read DIG and FPDTD.

It belongs to the IspF family. Homotrimer. A divalent metal cation serves as cofactor.

It carries out the reaction 4-CDP-2-C-methyl-D-erythritol 2-phosphate = 2-C-methyl-D-erythritol 2,4-cyclic diphosphate + CMP. Its pathway is isoprenoid biosynthesis; isopentenyl diphosphate biosynthesis via DXP pathway; isopentenyl diphosphate from 1-deoxy-D-xylulose 5-phosphate: step 4/6. Its function is as follows. Involved in the biosynthesis of isopentenyl diphosphate (IPP) and dimethylallyl diphosphate (DMAPP), two major building blocks of isoprenoid compounds. Catalyzes the conversion of 4-diphosphocytidyl-2-C-methyl-D-erythritol 2-phosphate (CDP-ME2P) to 2-C-methyl-D-erythritol 2,4-cyclodiphosphate (ME-CPP) with a corresponding release of cytidine 5-monophosphate (CMP). The sequence is that of 2-C-methyl-D-erythritol 2,4-cyclodiphosphate synthase from Ralstonia nicotianae (strain ATCC BAA-1114 / GMI1000) (Ralstonia solanacearum).